A 154-amino-acid polypeptide reads, in one-letter code: Protein X (154 aa).

The interval 68-117 (PCALRFTSARRMETTVNAHQFLPKVLHKRTLGLSAMSTTDLEAYFKDCLF) is mitochondrial targeting sequence.

The protein belongs to the orthohepadnavirus protein X family. In terms of assembly, may form homodimer. May interact with host CEBPA, CFLAR, CREB1, DDB1, E4F1, HBXIP, HSPD1/HSP60, NFKBIA, POLR2E and SMAD4. Interacts with host SMC5-SMC6 complex and induces its degradation. Interacts with host TRPC4AP; leading to prevent ubiquitination of TRPC4AP. Interacts with host PLSCR1; this interaction promotes ubiquitination and degradation of HBx and impairs HBx-mediated cell proliferation. Post-translationally, a fraction may be phosphorylated in insect cells and HepG2 cells, a human hepatoblastoma cell line. Phosphorylated in vitro by host protein kinase C or mitogen-activated protein kinase. N-acetylated in insect cells.

Its subcellular location is the host cytoplasm. The protein localises to the host nucleus. It localises to the host mitochondrion. Its function is as follows. Multifunctional protein that plays a role in silencing host antiviral defenses and promoting viral transcription. Does not seem to be essential for HBV infection. May be directly involved in development of cirrhosis and liver cancer (hepatocellular carcinoma). Most of cytosolic activities involve modulation of cytosolic calcium. The effect on apoptosis is controversial depending on the cell types in which the studies have been conducted. May induce apoptosis by localizing in mitochondria and causing loss of mitochondrial membrane potential. May also modulate apoptosis by binding host CFLAR, a key regulator of the death-inducing signaling complex (DISC). Promotes viral transcription by using the host E3 ubiquitin ligase DDB1 to target the SMC5-SMC6 complex to proteasomal degradation. This host complex would otherwise bind to viral episomal DNA, and prevents its transcription. Moderately stimulates transcription of many different viral and cellular transcription elements. Promoters and enhancers stimulated by HBx contain DNA binding sites for NF-kappa-B, AP-1, AP-2, c-EBP, ATF/CREB, or the calcium-activated factor NF-AT. The sequence is that of Protein X from Homo sapiens (Human).